Consider the following 124-residue polypeptide: Fluoride-specific ion channel FluC 2 (124 aa).

Helical transmembrane passes span 8–28, 34–54, 60–80, and 93–113; these read LPNQ…GALV, NDLL…GLPF, LLLG…MVEC, and LGLI…GFLI. 2 residues coordinate Na(+): G68 and T71.

It belongs to the fluoride channel Fluc/FEX (TC 1.A.43) family.

Its subcellular location is the cell inner membrane. It catalyses the reaction fluoride(in) = fluoride(out). Its activity is regulated as follows. Na(+) is not transported, but it plays an essential structural role and its presence is essential for fluoride channel function. Its function is as follows. Fluoride-specific ion channel. Important for reducing fluoride concentration in the cell, thus reducing its toxicity. The polypeptide is Fluoride-specific ion channel FluC 2 (Prochlorococcus marinus (strain MIT 9313)).